A 154-amino-acid polypeptide reads, in one-letter code: Putative NADPH-dependent 7-cyano-7-deazaguanine reductase (154 aa).

The active-site Proton donor is the Asp-52. Residues 67-69 and 86-87 contribute to the substrate site; these read VES and HE.

The protein belongs to the GTP cyclohydrolase I family. QueF type 1 subfamily.

Its subcellular location is the cytoplasm. It catalyses the reaction 7-aminomethyl-7-carbaguanine + 2 NADP(+) = 7-cyano-7-deazaguanine + 2 NADPH + 3 H(+). The protein operates within tRNA modification; tRNA-queuosine biosynthesis. Functionally, catalyzes the NADPH-dependent reduction of 7-cyano-7-deazaguanine (preQ0) to 7-aminomethyl-7-deazaguanine (preQ1). This chain is Putative NADPH-dependent 7-cyano-7-deazaguanine reductase, found in Streptococcus pneumoniae (strain ATCC BAA-255 / R6).